A 62-amino-acid chain; its full sequence is Sperm protamine P1 (62 aa).

Residues 1-62 (MARYRRHSRS…RRYSRRRRRY (62 aa)) are disordered.

This sequence belongs to the protamine P1 family. Testis.

It is found in the nucleus. The protein resides in the chromosome. In terms of biological role, protamines substitute for histones in the chromatin of sperm during the haploid phase of spermatogenesis. They compact sperm DNA into a highly condensed, stable and inactive complex. This chain is Sperm protamine P1 (PRM1), found in Sminthopsis longicaudata (Long-tailed dunnart).